Reading from the N-terminus, the 134-residue chain is MGRDTIAEIITSIRNADMDRKRVVRIASTNITENIVRILLREGFIENVRKHREKNKNFFVLTLRHRRNRKRPYRNIFNLKRISRPGLRIYSNYQRIPKILGGMGVVILSTSRGIMTDREARLEGIGGEILCYIW.

The protein belongs to the universal ribosomal protein uS8 family. Part of the 30S ribosomal subunit.

The protein localises to the plastid. It is found in the chloroplast. Functionally, one of the primary rRNA binding proteins, it binds directly to 16S rRNA central domain where it helps coordinate assembly of the platform of the 30S subunit. The protein is Small ribosomal subunit protein uS8c (rps8) of Ipomoea purpurea (Common morning glory).